Reading from the N-terminus, the 328-residue chain is MAKDIRVLLYYKYVPIENAEKFAADHLAFCKSIGLKGRILVADEGINGTVSGDYETTQKYMDYVHSLPGMEDLWFKIDEENEQAFKKMFVRYKKEIVHLGLEDNDFDNDINPLETTGAYLSPKEFKEALLDEDTVVLDTRNDYEYDLGHFRGAIRPDIRNFRELPQWVRDNKEKFMDKRVVVYCTGGVRCEKFSGWMVREGYKDVGQLHGGIATYGKDPEVQGELWDGKMYVFDERISVDINHVDPVVIGKDWFDGTPCERYVNCGNPECNRRILTSEENEDKYLRGCSHECRVHPRNRYVAENGLSQAEVVERLAVIGESLETLVAQ.

One can recognise a Rhodanese domain in the interval 130–224 (LDEDTVVLDT…YGKDPEVQGE (95 aa)). The active-site Cysteine persulfide intermediate is cysteine 184.

It belongs to the TrhO family.

It carries out the reaction uridine(34) in tRNA + AH2 + O2 = 5-hydroxyuridine(34) in tRNA + A + H2O. Catalyzes oxygen-dependent 5-hydroxyuridine (ho5U) modification at position 34 in tRNAs. The polypeptide is tRNA uridine(34) hydroxylase (Streptococcus gordonii (strain Challis / ATCC 35105 / BCRC 15272 / CH1 / DL1 / V288)).